The primary structure comprises 206 residues: uncharacterized protein (206 aa).

Residues 1–17 form the signal peptide; that stretch reads MKGKILFALFLSAGVIA. The N-palmitoyl cysteine moiety is linked to residue C18. C18 is lipidated: S-diacylglycerol cysteine. Positions 21-58 form a coiled coil; sequence ASQAAKQQEVKVAKAETKTKKKESKAEKFRKALAAQDK. The Cytochrome c domain occupies 97–201; it reads GDWRKGESLA…DIVAYLHDPE (105 aa). Heme c is bound by residues C127, C130, and H131.

The protein resides in the cell membrane. This is an uncharacterized protein from Aquifex aeolicus (strain VF5).